A 62-amino-acid polypeptide reads, in one-letter code: MGMRMMFTVFLLVALATTVASFTLDRASNGRNAAADDKPSDWIALAIKQCCANPPCKHVNCR.

The N-terminal stretch at methionine 1 to serine 21 is a signal peptide. A propeptide spanning residues phenylalanine 22–lysine 48 is cleaved from the precursor. Glutamine 49 is modified (pyrrolidone carboxylic acid). 2 cysteine pairs are disulfide-bonded: cysteine 50/cysteine 56 and cysteine 51/cysteine 61.

The protein belongs to the conotoxin A superfamily. In terms of tissue distribution, expressed by the venom duct.

Its subcellular location is the secreted. Alpha-conotoxins bind to the nicotinic acetylcholine receptors (nAChR) and inhibit them. This synthetic peptide (10 uM) selectively, but weakly inhibits both rat neuronal alpha-3-beta-2/CHRNA3-CHRNB2 (63%) and alpha-3-beta-4/CHRNA3-CHRNB4 (37%) subtypes of nAChR. This chain is Alpha-conotoxin-like Qc1.2, found in Conus quercinus (Oak cone).